We begin with the raw amino-acid sequence, 420 residues long: Gamma-glutamyl phosphate reductase (420 aa).

Belongs to the gamma-glutamyl phosphate reductase family.

It localises to the cytoplasm. The enzyme catalyses L-glutamate 5-semialdehyde + phosphate + NADP(+) = L-glutamyl 5-phosphate + NADPH + H(+). Its pathway is amino-acid biosynthesis; L-proline biosynthesis; L-glutamate 5-semialdehyde from L-glutamate: step 2/2. Catalyzes the NADPH-dependent reduction of L-glutamate 5-phosphate into L-glutamate 5-semialdehyde and phosphate. The product spontaneously undergoes cyclization to form 1-pyrroline-5-carboxylate. In Chlorobaculum parvum (strain DSM 263 / NCIMB 8327) (Chlorobium vibrioforme subsp. thiosulfatophilum), this protein is Gamma-glutamyl phosphate reductase.